We begin with the raw amino-acid sequence, 236 residues long: uncharacterized protein (236 aa).

NADP(+) is bound by residues Asp22, Asn49, and Lys82. Catalysis depends on proton donor residues Ser100 and Tyr114. NADP(+) contacts are provided by Tyr114 and Lys118. Lys118 (lowers pKa of active site Tyr) is an active-site residue.

Belongs to the short-chain dehydrogenases/reductases (SDR) family.

The protein resides in the cytoplasm. It is found in the nucleus. This is an uncharacterized protein from Schizosaccharomyces pombe (strain 972 / ATCC 24843) (Fission yeast).